The primary structure comprises 531 residues: MSSSTLEGQETASHHSKNSPSRHGDDGGLQTAGDEYVYIADHYGMVRRMIFIMTVCSSMFTNQLGLCNSLSTLEEIGESFGVTDPGKLSWTISGYGLTLGTFILIGGRLGDEFGNKAIFVIGMGWLALTSMMAGVSVYAGYPVYILARVLQGLGPALTVPNALAIMGKCFSEHPRNMGFAWFAASAPVGAMAGLLFGPLFTMAWWPWIYWSQALGVAFVFALSIVAIPNMPAESEQKQRRTILEILERIDLLGGACGVTALVLFNFAWNQSLVATWKEPYVYVCLILSFLFLAAFFYVELRVARHPILPVAVLTSDIAFVFGCTAAGWSTFGIWLFYVIRICLNIGGQTPIQMAAWLSPILVTGIGTALIVGKIITKVPASSIMLFAMLCYFITSLLMALRPVHSIYWTYFFFATIIATFAMDSSLPAATIIFANAVPRQYQGMGSSVIMTIVVYSISLGLGFAGTIELQINNGGHTKADLLHGYRGTLWFSVGLTAFGTVLALIFLLKDLRRRKLARTQVEEEKGHSSEA.

Positions 1 to 11 (MSSSTLEGQET) are enriched in polar residues. The interval 1–27 (MSSSTLEGQETASHHSKNSPSRHGDDG) is disordered. 13 helical membrane-spanning segments follow: residues 86-106 (GKLS…ILIG), 117-137 (AIFV…GVSV), 145-165 (ILAR…ALAI), 179-199 (FAWF…FGPL), 207-227 (WIYW…IVAI), 249-269 (IDLL…FAWN), 280-300 (YVYV…YVEL), 319-339 (FVFG…FYVI), 351-371 (IQMA…ALIV), 380-400 (ASSI…LMAL), 402-422 (PVHS…TFAM), 447-467 (SVIM…AGTI), and 488-508 (TLWF…IFLL).

The protein belongs to the major facilitator superfamily.

Its subcellular location is the cell membrane. Its function is as follows. Efflux pump that might be required for efficient secretion of terrein or other secondary metabolies produced by the terrein genne cluster. The chain is Efflux pump terG from Aspergillus terreus (strain NIH 2624 / FGSC A1156).